We begin with the raw amino-acid sequence, 252 residues long: Ribosomal RNA small subunit methyltransferase J (252 aa).

S-adenosyl-L-methionine is bound by residues arginine 101–aspartate 102, glutamate 117–arginine 118, serine 153–serine 154, and aspartate 171.

This sequence belongs to the methyltransferase superfamily. RsmJ family.

The protein resides in the cytoplasm. The catalysed reaction is guanosine(1516) in 16S rRNA + S-adenosyl-L-methionine = N(2)-methylguanosine(1516) in 16S rRNA + S-adenosyl-L-homocysteine + H(+). In terms of biological role, specifically methylates the guanosine in position 1516 of 16S rRNA. This is Ribosomal RNA small subunit methyltransferase J from Salmonella heidelberg (strain SL476).